The sequence spans 421 residues: Actin-related protein 6 (421 aa).

It belongs to the actin family. ARP6 subfamily. As to quaternary structure, component of the SWR1 chromatin-remodeling complex composed of at least ARP6/ESD1/SUF3, PIE1, SWC6, SWC2 and H2AZs (HTA8, HTA9, HTA11). Interacts directly with SWC6/SEF and PIE1. Also interacts with H2A.F/Z proteins. As to expression, mostly expressed in flowers, and, to a lower extent, in seedlings, shoot apex, stems, siliques, seeds, and roots (at protein level).

Its subcellular location is the nucleus. It is found in the cytoplasm. Its function is as follows. Component of the SWR1 complex which mediates the ATP-dependent exchange of histone H2A for the H2A variant H2A.F/Z leading to transcriptional regulation of selected genes (e.g. FLC) by chromatin remodeling. Binds to the promoter region of FLC chromatin. Required for the activation of FLC and FLC/MAF genes expression to levels that inhibit flowering, through both histone H3 and H4 acetylation and methylation mechanisms. Involved in several developmental processes including organization of plant organs, leaves formation, flowering time repression, and fertility. Modulates photoperiod-dependent epidermal leaves cell development; promotes cell division in long days, and cell expansion/division in short days. May be involved in the regulation of pathogenesis-related proteins (PRs). This chain is Actin-related protein 6 (ARP6), found in Arabidopsis thaliana (Mouse-ear cress).